The primary structure comprises 341 residues: Mitochondrial protein C2orf69 homolog (341 aa).

A mitochondrion-targeting transit peptide spans 1 to 35 (MLQVVQSPHNLVFMGSIRSVVACLSLAAVARKMTA).

Belongs to the C2orf69 family.

It is found in the mitochondrion matrix. In terms of biological role, may play a role in the respiratory chain. This is Mitochondrial protein C2orf69 homolog from Danio rerio (Zebrafish).